The following is a 136-amino-acid chain: Transcription antitermination protein NusB (136 aa).

The protein belongs to the NusB family.

Its function is as follows. Involved in transcription antitermination. Required for transcription of ribosomal RNA (rRNA) genes. Binds specifically to the boxA antiterminator sequence of the ribosomal RNA (rrn) operons. This chain is Transcription antitermination protein NusB, found in Arthrobacter sp. (strain FB24).